We begin with the raw amino-acid sequence, 132 residues long: Small ribosomal subunit protein bS6 (132 aa).

It belongs to the bacterial ribosomal protein bS6 family.

Functionally, binds together with bS18 to 16S ribosomal RNA. The polypeptide is Small ribosomal subunit protein bS6 (Chlorobium chlorochromatii (strain CaD3)).